The following is a 135-amino-acid chain: Ig heavy chain V region XIG14 (135 aa).

The first 18 residues, 1 to 18 (DFIIFFIFMFFSPSCILS), serve as a signal peptide directing secretion. The 109-residue stretch at 20–128 (TLQESGPGTV…GYNFDYWGQG (109 aa)) folds into the Ig-like domain.

This Xenopus laevis (African clawed frog) protein is Ig heavy chain V region XIG14.